Consider the following 355-residue polypeptide: 6-aminohexanoate-oligomer endohydrolase (355 aa).

Thr267 serves as the catalytic Nucleophile.

It belongs to the peptidase S58 family. Heterotetramer composed of 4 alpha/beta heterodimers. Expressed as an inactive precursor that is cleaved autocatalytically at Asn266/Thr267 to generate an active enzyme composed of an alpha subunit and a beta subunit.

It carries out the reaction [N-(6-aminohexanoyl)]n + H2O = [N-(6-aminohexanoyl)]n-x + [N-(6-aminohexanoyl)]x.. The protein operates within xenobiotic degradation; nylon-6 oligomer degradation. Involved in the degradation of nylon-6 oligomers. Degrades cyclic and linear oligomers of 6-aminohexanoate (Ahx) with a degree of polymerization greater than three by an endo-type mode. Cannot use Ahx cyclic dimer or the Ahx linear dimer. This chain is 6-aminohexanoate-oligomer endohydrolase, found in Kocuria sp. (strain KY2).